A 570-amino-acid chain; its full sequence is Methionine--tRNA ligase (570 aa).

Positions 14–24 match the 'HIGH' region motif; sequence PYINGIKHLGN. 4 residues coordinate Zn(2+): Cys146, Cys149, Cys159, and Cys162. Residues 347–351 carry the 'KMSKS' region motif; sequence QFSTS. Thr350 is an ATP binding site.

This sequence belongs to the class-I aminoacyl-tRNA synthetase family. MetG type 1 subfamily. In terms of assembly, monomer. The cofactor is Zn(2+).

It localises to the cytoplasm. The catalysed reaction is tRNA(Met) + L-methionine + ATP = L-methionyl-tRNA(Met) + AMP + diphosphate. Its function is as follows. Is required not only for elongation of protein synthesis but also for the initiation of all mRNA translation through initiator tRNA(fMet) aminoacylation. In Jannaschia sp. (strain CCS1), this protein is Methionine--tRNA ligase.